A 1184-amino-acid polypeptide reads, in one-letter code: Fibulin-2 (1184 aa).

A signal peptide spans 1 to 27 (MVLLWEPAGAWLALGLALALGPSVAAA). The interval 28-177 (APRQDCTGVE…ELICYQLPGC (150 aa)) is subdomain NA (Cys-rich). A n region spans residues 28-444 (APRQDCTGVE…EGSTKDLIET (417 aa)). Residues 178–444 (HGNFSDAEEG…EGSTKDLIET (267 aa)) are subdomain NB (Cys-free). Asn-180 carries N-linked (GlcNAc...) asparagine glycosylation. Disordered regions lie at residues 221–293 (VQAG…MAVT) and 399–437 (IPPT…PEGS). Positions 224–236 (GAGGPPAALGGGS) are enriched in gly residues. Low complexity predominate over residues 252 to 261 (PRPTAAAALG). Positions 276-288 (DSEEEEEEEEERE) are enriched in acidic residues. A Phosphoserine modification is found at Ser-277. Polar residues predominate over residues 423-436 (PNSVHSIPRSSPEG). 38 disulfide bridges follow: Cys-445-Cys-472, Cys-446-Cys-479, Cys-459-Cys-480, Cys-489-Cys-518, Cys-502-Cys-519, Cys-521-Cys-545, Cys-522-Cys-552, Cys-535-Cys-553, Cys-608-Cys-620, Cys-616-Cys-629, Cys-631-Cys-644, Cys-683-Cys-693, Cys-689-Cys-702, Cys-704-Cys-717, Cys-723-Cys-736, Cys-730-Cys-745, Cys-751-Cys-762, Cys-768-Cys-781, Cys-775-Cys-790, Cys-796-Cys-808, Cys-814-Cys-827, Cys-821-Cys-836, Cys-843-Cys-856, Cys-862-Cys-875, Cys-869-Cys-884, Cys-886-Cys-899, Cys-905-Cys-917, Cys-913-Cys-926, Cys-928-Cys-941, Cys-947-Cys-956, Cys-952-Cys-965, Cys-967-Cys-980, Cys-986-Cys-998, Cys-994-Cys-1007, Cys-1009-Cys-1023, Cys-1029-Cys-1042, Cys-1036-Cys-1051, and Cys-1056-Cys-1068. Anaphylatoxin-like domains follow at residues 445–480 (CCAA…RHCC), 488–519 (SCMA…KQCC), and 521–553 (CCGL…LSCC). A glycan (N-linked (GlcNAc...) asparagine) is linked at Asn-507. Residues 604–645 (DQDECLLLPGELCQHLCINTVGSYHCACFPGFSLQDDGRTCR) enclose the EGF-like 1; calcium-binding domain. In terms of domain architecture, EGF-like 2 spans 679-718 (QPNTCKDNGPCKQVCSTVGGSAICSCFPGYAIMADGVSCE). The EGF-like 3; calcium-binding domain occupies 719-763 (DINECVTDLHTCSRGEHCVNTLGSFHCYKALTCEPGYALKDGECE). The EGF-like 4; calcium-binding domain occupies 764 to 809 (DVDECAMGTHTCQPGFLCQNTKGSFYCQARQRCMDGFLQDPEGNCV). Positions 810–857 (DINECTSLSEPCRPGFSCINTVGSYTCQRNPLICARGYHASDDGTKCV) constitute an EGF-like 5; calcium-binding domain. An EGF-like 6; calcium-binding domain is found at 858 to 900 (DVNECETGVHRCGEGQVCHNLPGSYRCDCKAGFQRDAFGRGCI). An EGF-like 7; calcium-binding domain is found at 901–942 (DVNECWASPGRLCQHTCENTLGSYRCSCASGFLLAADGKRCE). The EGF-like 8; calcium-binding domain occupies 943–981 (DVNECEAQRCSQECANIYGSYQCYCRQGYQLAEDGHTCT). An EGF-like 9; calcium-binding domain is found at 982–1024 (DIDECAQGAGILCTFRCLNVPGSYQCACPEQGYTMTANGRSCK). One can recognise an EGF-like 10; calcium-binding domain in the interval 1025 to 1069 (DVDECALGTHNCSEAETCHNIQGSFRCLRFECPPNYVQVSKTKCE). An N-linked (GlcNAc...) asparagine glycan is attached at Asn-1035. The tract at residues 1070–1184 (RTTCHDFLEC…MHIFFTTFAL (115 aa)) is domain III.

It belongs to the fibulin family. In terms of assembly, homotrimer; disulfide-linked. Interacts with LAMA2. Interacts with FBN1 (via N-terminal domain). Forms a ternary complex with ELN and FBN1. In terms of processing, O-glycosylated with core 1 or possibly core 8 glycans. It is unsure if the O-glycosylation is on Thr-347 or Ser-348. Component of both basement membranes and other connective tissues. Expressed in heart, placenta and ovary.

The protein resides in the secreted. It is found in the extracellular space. The protein localises to the extracellular matrix. Its binding to fibronectin and some other ligands is calcium dependent. May act as an adapter that mediates the interaction between FBN1 and ELN. The protein is Fibulin-2 (FBLN2) of Homo sapiens (Human).